Reading from the N-terminus, the 198-residue chain is Na(+)-translocating NADH-quinone reductase subunit E (198 aa).

6 helical membrane-spanning segments follow: residues 11-31, 39-59, 77-97, 110-130, 140-160, and 176-196; these read SIFI…FLAV, FGLG…NNLV, FLNF…LEMV, GIFL…SFMV, IVYG…LAGI, and LGIT…FSGV.

Belongs to the NqrDE/RnfAE family. Composed of six subunits; NqrA, NqrB, NqrC, NqrD, NqrE and NqrF. The N-terminus is blocked.

It is found in the cell inner membrane. It carries out the reaction a ubiquinone + n Na(+)(in) + NADH + H(+) = a ubiquinol + n Na(+)(out) + NAD(+). With respect to regulation, this reaction is tightly coupled to the Na(+) pumping activity and specifically requires Na(+) for activity. Inhibited by korormicin and 2-N-heptyl-4-hydroxyquinoline N-oxide (HQNO). In terms of biological role, NQR complex catalyzes the reduction of ubiquinone-1 to ubiquinol by two successive reactions, coupled with the transport of Na(+) ions from the cytoplasm to the periplasm. NqrA to NqrE are probably involved in the second step, the conversion of ubisemiquinone to ubiquinol. This chain is Na(+)-translocating NADH-quinone reductase subunit E, found in Vibrio alginolyticus.